Reading from the N-terminus, the 202-residue chain is Putative 3-methyladenine DNA glycosylase (202 aa).

Belongs to the DNA glycosylase MPG family.

This is Putative 3-methyladenine DNA glycosylase from Staphylococcus aureus (strain MRSA252).